We begin with the raw amino-acid sequence, 78 residues long: Acyl carrier protein AcpP (78 aa).

One can recognise a Carrier domain in the interval 2–77 (SDTAERVKKI…DAVKYIDKAS (76 aa)). An O-(pantetheine 4'-phosphoryl)serine modification is found at Ser37.

This sequence belongs to the acyl carrier protein (ACP) family. In terms of processing, 4'-phosphopantetheine is transferred from CoA to a specific serine of apo-ACP by AcpS. This modification is essential for activity because fatty acids are bound in thioester linkage to the sulfhydryl of the prosthetic group.

Its subcellular location is the cytoplasm. The protein operates within lipid metabolism; fatty acid biosynthesis. Functionally, carrier of the growing fatty acid chain in fatty acid biosynthesis. This Mesorhizobium japonicum (strain LMG 29417 / CECT 9101 / MAFF 303099) (Mesorhizobium loti (strain MAFF 303099)) protein is Acyl carrier protein AcpP.